The chain runs to 238 residues: 5'-deoxynucleotidase YBR242W (238 aa).

The region spanning 77 to 183 is the HD domain; the sequence is ISDHMYRLSI…VKDIDKYEML (107 aa). A divalent metal cation-binding residues include H80, H108, D109, E112, D117, I118, and D178.

This sequence belongs to the HDDC2 family. In terms of assembly, homodimer. Requires Mn(2+) as cofactor. It depends on Co(2+) as a cofactor. Mg(2+) serves as cofactor.

It carries out the reaction a 2'-deoxyribonucleoside 5'-phosphate + H2O = a 2'-deoxyribonucleoside + phosphate. Functionally, catalyzes the dephosphorylation of the nucleoside 5'-monophosphates deoxyadenosine monophosphate (dAMP), deoxycytidine monophosphate (dCMP), deoxyguanosine monophosphate (dGMP) and deoxythymidine monophosphate (dTMP). In Saccharomyces cerevisiae (strain ATCC 204508 / S288c) (Baker's yeast), this protein is 5'-deoxynucleotidase YBR242W.